Here is a 386-residue protein sequence, read N- to C-terminus: Protein-glutamate methylesterase/protein-glutamine glutaminase (386 aa).

Residues 4–121 (KVLVVDDSAF…ARNRDEAVKT (118 aa)) enclose the Response regulatory domain. 4-aspartylphosphate is present on Asp55. The disordered stretch occupies residues 133–161 (PVSRTSARASTPPPVAKQPERSSEPTTAL). Positions 190–384 (INRAYQLLAI…KAIMKEVGYS (195 aa)) constitute a CheB-type methylesterase domain. Catalysis depends on residues Ser202, His229, and Asp326.

It belongs to the CheB family. Phosphorylated by CheA. Phosphorylation of the N-terminal regulatory domain activates the methylesterase activity.

It is found in the cytoplasm. The catalysed reaction is [protein]-L-glutamate 5-O-methyl ester + H2O = L-glutamyl-[protein] + methanol + H(+). The enzyme catalyses L-glutaminyl-[protein] + H2O = L-glutamyl-[protein] + NH4(+). Functionally, involved in chemotaxis. Part of a chemotaxis signal transduction system that modulates chemotaxis in response to various stimuli. Catalyzes the demethylation of specific methylglutamate residues introduced into the chemoreceptors (methyl-accepting chemotaxis proteins or MCP) by CheR. Also mediates the irreversible deamidation of specific glutamine residues to glutamic acid. The sequence is that of Protein-glutamate methylesterase/protein-glutamine glutaminase from Idiomarina loihiensis (strain ATCC BAA-735 / DSM 15497 / L2-TR).